The primary structure comprises 98 residues: NADH-ubiquinone oxidoreductase chain 4L (98 aa).

The next 3 membrane-spanning stretches (helical) occupy residues 1–21, 29–49, and 58–78; these read MPLIYMNIMLAFTISLLGMLV, SLLCLEGMMLSLFIMTTLMTL, and IVPITMLVFAACEAAVGLALL.

Belongs to the complex I subunit 4L family. As to quaternary structure, core subunit of respiratory chain NADH dehydrogenase (Complex I) which is composed of 45 different subunits.

It is found in the mitochondrion inner membrane. It catalyses the reaction a ubiquinone + NADH + 5 H(+)(in) = a ubiquinol + NAD(+) + 4 H(+)(out). In terms of biological role, core subunit of the mitochondrial membrane respiratory chain NADH dehydrogenase (Complex I) which catalyzes electron transfer from NADH through the respiratory chain, using ubiquinone as an electron acceptor. Part of the enzyme membrane arm which is embedded in the lipid bilayer and involved in proton translocation. The sequence is that of NADH-ubiquinone oxidoreductase chain 4L (MT-ND4L) from Pan paniscus (Pygmy chimpanzee).